The following is a 415-amino-acid chain: Putative competence-damage inducible protein (415 aa).

Belongs to the CinA family.

The chain is Putative competence-damage inducible protein from Listeria welshimeri serovar 6b (strain ATCC 35897 / DSM 20650 / CCUG 15529 / CIP 8149 / NCTC 11857 / SLCC 5334 / V8).